The chain runs to 319 residues: Selection and upkeep of intraepithelial T-cells protein 9 (319 aa).

The signal sequence occupies residues 1-26 (MESSASCLPGFFMSFLLLQNTVLTQA). In terms of domain architecture, Ig-like V-type spans 27 to 117 (MRSDIKINIQ…TNQEKKRSIV (91 aa)). Over 27–139 (MRSDIKINIQ…LMSNKFSCPS (113 aa)) the chain is Extracellular. Cys47 and Cys101 are oxidised to a cystine. Asn105 carries N-linked (GlcNAc...) asparagine glycosylation. Residues 140–160 (IYLITIIFLNFLRGILVFCCL) traverse the membrane as a helical segment. The Cytoplasmic segment spans residues 161-183 (RRKPVCFRNLMSTVMEALYSKMG). Residues 184–204 (VCCLLIWECLLLVLYIAFLPI) form a helical membrane-spanning segment. At 205–228 (YVSFRSRAFLLDDTYPLYTNWLWN) the chain is on the extracellular side. The helical transmembrane segment at 229 to 249 (ICIILTVIMVLFPGLILCLLW) threads the bilayer. The Cytoplasmic segment spans residues 250–319 (TLNCYGQVSS…DDTASTLFIS (70 aa)).

It belongs to the SKINT family. Expressed in skin, thymus and testis.

It localises to the membrane. Functionally, may act by engaging a cell surface molecule on immature T-cells in the embryonic thymus. This is Selection and upkeep of intraepithelial T-cells protein 9 (Skint9) from Mus musculus (Mouse).